Reading from the N-terminus, the 339-residue chain is UDP-glucose 4-epimerase (339 aa).

Residues Phe12–Ile13, Asp32–Ser37, Asp59–Ile60, Phe81–Lys85, Asn100, Ser125, Tyr150, Lys154, and Phe179 each bind NAD(+). Residues Ser125 and Tyr150 each contribute to the substrate site. Tyr150 functions as the Proton acceptor in the catalytic mechanism. Substrate-binding positions include Asn180, Asn200–Leu201, Ala217–Phe219, Arg232, and Arg293–Asp296.

Belongs to the NAD(P)-dependent epimerase/dehydratase family. Homodimer. The cofactor is NAD(+).

The enzyme catalyses UDP-alpha-D-glucose = UDP-alpha-D-galactose. It participates in carbohydrate metabolism; galactose metabolism. In terms of biological role, involved in the metabolism of galactose. Plays an essential role in the incorporation of galactose into meningococcal lipopolysaccharide surface molecules, which are important for pathogenesis. Catalyzes the conversion of UDP-galactose (UDP-Gal) to UDP-glucose (UDP-Glc) through a mechanism involving the transient reduction of NAD. This is UDP-glucose 4-epimerase (galE) from Neisseria meningitidis serogroup C.